The following is a 116-amino-acid chain: uncharacterized protein (116 aa).

Positions 6 to 83 (ATVHVGNLAP…RCIRVSPANF (78 aa)) constitute an RRM domain.

Its subcellular location is the cytoplasm. It is found in the nucleus. This is an uncharacterized protein from Schizosaccharomyces pombe (strain 972 / ATCC 24843) (Fission yeast).